A 364-amino-acid polypeptide reads, in one-letter code: Thymidine kinase (364 aa).

ATP is bound at residue 36 to 43; it reads GPFGVGKT. Residue E64 is the Proton acceptor of the active site. Position 108 (Q108) interacts with substrate. R201 is a binding site for ATP. Residue R207 coordinates substrate.

It belongs to the herpesviridae thymidine kinase family. As to quaternary structure, homodimer.

The catalysed reaction is thymidine + ATP = dTMP + ADP + H(+). Its function is as follows. Catalyzes the transfer of the gamma-phospho group of ATP to thymidine to generate dTMP in the salvage pathway of pyrimidine synthesis. The dTMP serves as a substrate for DNA polymerase during viral DNA replication. Allows the virus to be reactivated and to grow in non-proliferative cells lacking a high concentration of phosphorylated nucleic acid precursors. This Infectious laryngotracheitis virus (strain Thorne V882) (ILTV) protein is Thymidine kinase.